Consider the following 329-residue polypeptide: Serpentine receptor class alpha-7 (329 aa).

7 helical membrane passes run tyrosine 25 to valine 45, isoleucine 57 to alanine 77, tyrosine 104 to leucine 124, valine 143 to isoleucine 163, arginine 187 to leucine 207, threonine 237 to phenylalanine 257, and phenylalanine 273 to valine 293.

The protein belongs to the nematode receptor-like protein sra family.

It is found in the membrane. The chain is Serpentine receptor class alpha-7 (sra-7) from Caenorhabditis elegans.